A 257-amino-acid chain; its full sequence is 1-(5-phosphoribosyl)-5-[(5-phosphoribosylamino)methylideneamino] imidazole-4-carboxamide isomerase (257 aa).

Catalysis depends on Asp-8, which acts as the Proton acceptor. Catalysis depends on Asp-129, which acts as the Proton donor.

This sequence belongs to the HisA/HisF family.

It is found in the cytoplasm. The enzyme catalyses 1-(5-phospho-beta-D-ribosyl)-5-[(5-phospho-beta-D-ribosylamino)methylideneamino]imidazole-4-carboxamide = 5-[(5-phospho-1-deoxy-D-ribulos-1-ylimino)methylamino]-1-(5-phospho-beta-D-ribosyl)imidazole-4-carboxamide. Its pathway is amino-acid biosynthesis; L-histidine biosynthesis; L-histidine from 5-phospho-alpha-D-ribose 1-diphosphate: step 4/9. This Acaryochloris marina (strain MBIC 11017) protein is 1-(5-phosphoribosyl)-5-[(5-phosphoribosylamino)methylideneamino] imidazole-4-carboxamide isomerase.